A 620-amino-acid chain; its full sequence is DNA mismatch repair protein MutL (620 aa).

The protein belongs to the DNA mismatch repair MutL/HexB family.

In terms of biological role, this protein is involved in the repair of mismatches in DNA. It is required for dam-dependent methyl-directed DNA mismatch repair. May act as a 'molecular matchmaker', a protein that promotes the formation of a stable complex between two or more DNA-binding proteins in an ATP-dependent manner without itself being part of a final effector complex. The polypeptide is DNA mismatch repair protein MutL (Clostridium tetani (strain Massachusetts / E88)).